Consider the following 569-residue polypeptide: Urease subunit alpha (569 aa).

A Urease domain is found at G131–L569. Ni(2+)-binding residues include H136, H138, and K219. K219 is subject to N6-carboxylysine. H221 is a binding site for substrate. The Ni(2+) site is built by H248 and H274. H322 functions as the Proton donor in the catalytic mechanism. D362 is a Ni(2+) binding site.

Belongs to the metallo-dependent hydrolases superfamily. Urease alpha subunit family. In terms of assembly, heterotrimer of UreA (gamma), UreB (beta) and UreC (alpha) subunits. Three heterotrimers associate to form the active enzyme. Ni cation serves as cofactor. Carboxylation allows a single lysine to coordinate two nickel ions.

The protein resides in the cytoplasm. It catalyses the reaction urea + 2 H2O + H(+) = hydrogencarbonate + 2 NH4(+). It participates in nitrogen metabolism; urea degradation; CO(2) and NH(3) from urea (urease route): step 1/1. In Prochlorococcus marinus (strain NATL2A), this protein is Urease subunit alpha.